A 214-amino-acid chain; its full sequence is Protein-L-isoaspartate O-methyltransferase (214 aa).

Residue S63 is part of the active site.

The protein belongs to the methyltransferase superfamily. L-isoaspartyl/D-aspartyl protein methyltransferase family.

The protein localises to the cytoplasm. It carries out the reaction [protein]-L-isoaspartate + S-adenosyl-L-methionine = [protein]-L-isoaspartate alpha-methyl ester + S-adenosyl-L-homocysteine. Its function is as follows. Catalyzes the methyl esterification of L-isoaspartyl residues in peptides and proteins that result from spontaneous decomposition of normal L-aspartyl and L-asparaginyl residues. It plays a role in the repair and/or degradation of damaged proteins. The polypeptide is Protein-L-isoaspartate O-methyltransferase (Maridesulfovibrio salexigens (strain ATCC 14822 / DSM 2638 / NCIMB 8403 / VKM B-1763) (Desulfovibrio salexigens)).